The sequence spans 129 residues: Small ribosomal subunit protein uS11 (129 aa).

Belongs to the universal ribosomal protein uS11 family. As to quaternary structure, part of the 30S ribosomal subunit. Interacts with proteins S7 and S18. Binds to IF-3.

Its function is as follows. Located on the platform of the 30S subunit, it bridges several disparate RNA helices of the 16S rRNA. Forms part of the Shine-Dalgarno cleft in the 70S ribosome. The chain is Small ribosomal subunit protein uS11 from Staphylococcus saprophyticus subsp. saprophyticus (strain ATCC 15305 / DSM 20229 / NCIMB 8711 / NCTC 7292 / S-41).